A 452-amino-acid chain; its full sequence is Probable ECA polymerase (452 aa).

11 helical membrane passes run 6–26, 37–57, 63–83, 118–138, 155–175, 181–201, 207–227, 228–248, 341–361, 378–398, and 410–430; these read FSGLLVVWLLSTLFIATLTWF, VFFSLLFLLTFFFGFPLTSVL, VGVAPPEILLQALLSAACFYG, VILMGIALVSVAIFFMHNGFL, GVALKRFFYFFIPAMLVVYFL, AWLFFLVSTVAFGLLTYMIVG, IIIAFAIFLFIGIIRGWISLW, MLAAAGVLGIVGMFWLALKRY, LVVMGGALFIPLGAIVVGLII, YKAAILHSFCFGAIFNMIVLA, and VFFLVVFGASLLVAKLLFWLF.

The protein belongs to the WzyE family. Probably part of a complex composed of WzxE, WzyE and WzzE.

The protein resides in the cell inner membrane. It functions in the pathway bacterial outer membrane biogenesis; enterobacterial common antigen biosynthesis. Probably involved in the polymerization of enterobacterial common antigen (ECA) trisaccharide repeat units. The protein is Probable ECA polymerase of Salmonella typhi.